Here is a 273-residue protein sequence, read N- to C-terminus: NH(3)-dependent NAD(+) synthetase (273 aa).

Residue 47-54 coordinates ATP; it reads GISGGQDS. Position 53 (aspartate 53) interacts with Mg(2+). Deamido-NAD(+) is bound at residue arginine 139. Threonine 159 serves as a coordination point for ATP. Position 164 (glutamate 164) interacts with Mg(2+). Residues lysine 172 and aspartate 179 each contribute to the deamido-NAD(+) site. ATP contacts are provided by lysine 188 and threonine 210. Residue 259-260 coordinates deamido-NAD(+); the sequence is HK.

The protein belongs to the NAD synthetase family. As to quaternary structure, homodimer.

The catalysed reaction is deamido-NAD(+) + NH4(+) + ATP = AMP + diphosphate + NAD(+) + H(+). It functions in the pathway cofactor biosynthesis; NAD(+) biosynthesis; NAD(+) from deamido-NAD(+) (ammonia route): step 1/1. In terms of biological role, catalyzes the ATP-dependent amidation of deamido-NAD to form NAD. Uses ammonia as a nitrogen source. The sequence is that of NH(3)-dependent NAD(+) synthetase from Staphylococcus aureus (strain COL).